Reading from the N-terminus, the 308-residue chain is D-alanine--D-alanine ligase (308 aa).

The 198-residue stretch at lysine 104 to glutamate 301 folds into the ATP-grasp domain. Isoleucine 130 to threonine 185 provides a ligand contact to ATP. Residues aspartate 255, glutamate 268, and asparagine 270 each contribute to the Mg(2+) site.

It belongs to the D-alanine--D-alanine ligase family. Mg(2+) is required as a cofactor. The cofactor is Mn(2+).

Its subcellular location is the cytoplasm. It catalyses the reaction 2 D-alanine + ATP = D-alanyl-D-alanine + ADP + phosphate + H(+). It participates in cell wall biogenesis; peptidoglycan biosynthesis. Functionally, cell wall formation. The sequence is that of D-alanine--D-alanine ligase from Acinetobacter baumannii (strain SDF).